The sequence spans 1067 residues: FHIP family protein GL19323 (1067 aa).

Residues 1–11 show a composition bias toward polar residues; it reads MSWLRSSPLRQ. Disordered regions lie at residues 1-31, 503-525, and 832-1013; these read MSWLRSSPLRQSGNGGGGGVSTGHSSTGSLR, LARPKSVHEQQPPSGATGEQPIQ, and NENS…SEPA. Phosphoserine occurs at positions 508 and 835. Positions 842 to 858 are enriched in low complexity; that stretch reads QPQTTLSQQQQQQQGQQ. A compositionally biased stretch (polar residues) spans 859 to 878; sequence RSAYATLSAATPVQATQTSA. The segment covering 893–904 has biased composition (low complexity); that stretch reads SKSISSMFSRRS. Residues 918–949 are compositionally biased toward polar residues; that stretch reads LVGNNNSGSGQSQPFSSTGTGTCETSLSTNPQ. Low complexity predominate over residues 950 to 979; sequence SGAAAARSTGTATTANGNSSNSNISIGGST. A compositionally biased stretch (polar residues) spans 980–996; the sequence is QTLSGHSNTTTYSSSTL.

Belongs to the FHIP family.

The sequence is that of FHIP family protein GL19323 from Drosophila persimilis (Fruit fly).